Consider the following 312-residue polypeptide: Olfactory receptor 6C75 (312 aa).

At 1-23 (MRNSTAVTDFILLGLTSDPQWQV) the chain is on the extracellular side. The N-linked (GlcNAc...) asparagine glycan is linked to Asn3. The chain crosses the membrane as a helical span at residues 24–44 (VLFIFLLVTYMLSVTGNLIII). Residues 45-63 (TLTLSDPHLQTPMYFFLRN) are Cytoplasmic-facing. The chain crosses the membrane as a helical span at residues 64–84 (FSFLEISFTSVCIPRFLVTVV). The Extracellular portion of the chain corresponds to 85–95 (TGNRTISYNGC). An intrachain disulfide couples Cys95 to Cys177. Residues 96–116 (VAQLFFFIFLGVTEFYLLAAM) traverse the membrane as a helical segment. The Cytoplasmic segment spans residues 117–140 (SYDRCMAICKPLHYTIIMSTRVCT). A helical membrane pass occupies residues 141-161 (LLVFSSWLAGFLIIFPPVMLL). Topologically, residues 162 to 194 (LQLDFCASNVIDHFICDSSPMLQLSCTNTHFLE) are extracellular. A helical membrane pass occupies residues 195–215 (LMAFFLAVVTLMVTLTLVILS). The Cytoplasmic segment spans residues 216–237 (YTNIIRTILKIPSMSQRKKAFS). The helical transmembrane segment at 238-258 (TCSSHMIVVSISYSSCIFMYI) threads the bilayer. Topologically, residues 259-269 (KTSARERVTLS) are extracellular. Residues 270 to 290 (KGVAVLNTSVAPLLNPFIYTL) traverse the membrane as a helical segment. Residues 291 to 312 (RNKQVKQAFKSMVQKMIFSLNK) lie on the Cytoplasmic side of the membrane.

Belongs to the G-protein coupled receptor 1 family.

The protein resides in the cell membrane. Functionally, odorant receptor. In Homo sapiens (Human), this protein is Olfactory receptor 6C75 (OR6C75).